A 427-amino-acid polypeptide reads, in one-letter code: Enolase (427 aa).

Residue Gln163 participates in (2R)-2-phosphoglycerate binding. Residue Glu205 is the Proton donor of the active site. Mg(2+) is bound by residues Asp242, Glu285, and Asp312. (2R)-2-phosphoglycerate is bound by residues Lys337, Arg366, Ser367, and Lys388. The active-site Proton acceptor is the Lys337.

This sequence belongs to the enolase family. The cofactor is Mg(2+).

The protein resides in the cytoplasm. It is found in the secreted. The protein localises to the cell surface. It catalyses the reaction (2R)-2-phosphoglycerate = phosphoenolpyruvate + H2O. Its pathway is carbohydrate degradation; glycolysis; pyruvate from D-glyceraldehyde 3-phosphate: step 4/5. In terms of biological role, catalyzes the reversible conversion of 2-phosphoglycerate (2-PG) into phosphoenolpyruvate (PEP). It is essential for the degradation of carbohydrates via glycolysis. In Rhodopseudomonas palustris (strain TIE-1), this protein is Enolase.